The primary structure comprises 156 residues: Small ribosomal subunit protein uS7 (156 aa).

It belongs to the universal ribosomal protein uS7 family. As to quaternary structure, part of the 30S ribosomal subunit. Contacts proteins S9 and S11.

Its function is as follows. One of the primary rRNA binding proteins, it binds directly to 16S rRNA where it nucleates assembly of the head domain of the 30S subunit. Is located at the subunit interface close to the decoding center, probably blocks exit of the E-site tRNA. This is Small ribosomal subunit protein uS7 from Buchnera aphidicola subsp. Baizongia pistaciae (strain Bp).